The following is a 1404-amino-acid chain: DNA-directed RNA polymerase subunit beta' (1404 aa).

Residues Cys-70, Cys-72, Cys-85, and Cys-88 each contribute to the Zn(2+) site. 3 residues coordinate Mg(2+): Asp-460, Asp-462, and Asp-464. Zn(2+) is bound by residues Cys-814, Cys-888, Cys-895, and Cys-898.

This sequence belongs to the RNA polymerase beta' chain family. The RNAP catalytic core consists of 2 alpha, 1 beta, 1 beta' and 1 omega subunit. When a sigma factor is associated with the core the holoenzyme is formed, which can initiate transcription. The cofactor is Mg(2+). Zn(2+) serves as cofactor.

It carries out the reaction RNA(n) + a ribonucleoside 5'-triphosphate = RNA(n+1) + diphosphate. Functionally, DNA-dependent RNA polymerase catalyzes the transcription of DNA into RNA using the four ribonucleoside triphosphates as substrates. The sequence is that of DNA-directed RNA polymerase subunit beta' from Shewanella amazonensis (strain ATCC BAA-1098 / SB2B).